The following is a 45-amino-acid chain: Metallothionein-like protein 1C (45 aa).

Belongs to the metallothionein superfamily. Type 15 family. As to expression, widely expressed at low levels.

Its function is as follows. Metallothioneins have a high content of cysteine residues that bind various heavy metals. Confers tolerance to cadmium (Cd) and plays a role in Cd and zinc (Zn) homeostasis. The polypeptide is Metallothionein-like protein 1C (MT1C) (Arabidopsis thaliana (Mouse-ear cress)).